The chain runs to 688 residues: MLASVNSCSLPRDRSMTDRFQLVSPYSPAGDQPAAIDKLVANFEAGLAKQTLLGVTGSGKTYTIANVVQQVQKPTLVMAPNKTLAAQLYGEFKSFFPHNAVEYFVSYYDYYQPEAYVPSSDTFIEKDSSINEHIEQMRLSATKTLLSRRDSLVVATVSAIYGLGAPEDYLSLRLILSIGEHIDQRQLIRHLTDLQYTRNEFELTRGAFRVRGEVLDVFPAESDTEALRIELFDGDIEQLTLFDPLTGETLRKLQRYTVYPKTHYATTRERTLSAVDTIKEELKERLEQLYSQNKLVEAQRLAQRTQFDLEMMAEVGFCNGIENYSRHLTGKAPGEPPPTLFDYLPPDALLVIDESHVTIPQIGAMYKGDRSRKETLVEFGFRLPSALDNRPLRFEEWEARSPRSIYVSATPGPYELRESAGEVTELVVRPTGLIDPVVEIRPVGTQVDDLMSEIHERIKLGDRVLVTTLTKRMAENLTEYLGEHGIRVRYLHSDIDTVERVEIIRDLRLGKFDVLVGINLLREGLDMPEVSLVAILDADKEGFLRSTGSLIQTIGRAARNLRGKAILYADKMTRSMQAAIDESDRRREKQVEYNLEHGITPESVERPISDIMEGAREDAAEKKSGKGRSKSRQVAEETPDYRAMKPAEIAGKLKSLEQKMYQHAKDLEFEAAAQIRDQIQKLKTASLA.

In terms of domain architecture, Helicase ATP-binding spans 41–429; that stretch reads ANFEAGLAKQ…AGEVTELVVR (389 aa). Residue 54-61 coordinates ATP; sequence GVTGSGKT. Positions 107–130 match the Beta-hairpin motif; that stretch reads YYDYYQPEAYVPSSDTFIEKDSSI. Residues 446 to 612 form the Helicase C-terminal domain; it reads QVDDLMSEIH…SVERPISDIM (167 aa). The disordered stretch occupies residues 616–646; it reads REDAAEKKSGKGRSKSRQVAEETPDYRAMKP. Residues 633–645 show a composition bias toward basic and acidic residues; sequence QVAEETPDYRAMK. In terms of domain architecture, UVR spans 650–685; sequence AGKLKSLEQKMYQHAKDLEFEAAAQIRDQIQKLKTA.

This sequence belongs to the UvrB family. In terms of assembly, forms a heterotetramer with UvrA during the search for lesions. Interacts with UvrC in an incision complex.

Its subcellular location is the cytoplasm. Functionally, the UvrABC repair system catalyzes the recognition and processing of DNA lesions. A damage recognition complex composed of 2 UvrA and 2 UvrB subunits scans DNA for abnormalities. Upon binding of the UvrA(2)B(2) complex to a putative damaged site, the DNA wraps around one UvrB monomer. DNA wrap is dependent on ATP binding by UvrB and probably causes local melting of the DNA helix, facilitating insertion of UvrB beta-hairpin between the DNA strands. Then UvrB probes one DNA strand for the presence of a lesion. If a lesion is found the UvrA subunits dissociate and the UvrB-DNA preincision complex is formed. This complex is subsequently bound by UvrC and the second UvrB is released. If no lesion is found, the DNA wraps around the other UvrB subunit that will check the other stand for damage. The chain is UvrABC system protein B from Xanthomonas oryzae pv. oryzae (strain KACC10331 / KXO85).